The following is a 338-amino-acid chain: Phenylalanine--tRNA ligase alpha subunit (338 aa).

E253 serves as a coordination point for Mg(2+).

Belongs to the class-II aminoacyl-tRNA synthetase family. Phe-tRNA synthetase alpha subunit type 1 subfamily. Tetramer of two alpha and two beta subunits. Mg(2+) is required as a cofactor.

The protein localises to the cytoplasm. It catalyses the reaction tRNA(Phe) + L-phenylalanine + ATP = L-phenylalanyl-tRNA(Phe) + AMP + diphosphate + H(+). This Geobacter metallireducens (strain ATCC 53774 / DSM 7210 / GS-15) protein is Phenylalanine--tRNA ligase alpha subunit.